A 194-amino-acid polypeptide reads, in one-letter code: Factor in the germline alpha (194 aa).

Positions 59 to 111 (ERRRVANAKERERIKNLNRGFAKLKALVPFLPQSRKPSKVDILKGATEYIQIL) constitute a bHLH domain. Residues 121–137 (SEKQSPEEQTHSGRPSD) show a composition bias toward basic and acidic residues. The segment at 121–163 (SEKQSPEEQTHSGRPSDPHVSSTRELLGNATQPTSCASGLKKE) is disordered. The span at 139-157 (HVSSTRELLGNATQPTSCA) shows a compositional bias: polar residues.

As to quaternary structure, heterodimer with TCF3/isoform E12. In terms of tissue distribution, expressed only in the oocytes within the ovary and at lower level in the testis. Found in the resting oocytes of the primordial follicle cells, at the periphery of the ovary and in the hilar region. Also detected in growing oocytes, but at lower levels.

The protein resides in the nucleus. Functionally, germ-line specific transcription factor implicated in postnatal oocyte-specific gene expression. Plays a key regulatory role in the expression of multiple oocyte-specific genes, including those that initiate folliculogenesis and those that encode the zona pellucida (ZP1, ZP2 and ZP3) required for fertilization and early embryonic survival. Essential for oocytes to survive and form primordial follicles. The persistence of FIGLA in adult females suggests that it may regulate additional pathways that are essential for normal ovarian development. Binds to the E-box (5'-CANNTG-3') of the ZPs (ZP1, ZP2, ZP3) promoters. The polypeptide is Factor in the germline alpha (Figla) (Mus musculus (Mouse)).